The sequence spans 186 residues: UPF0200 protein PH1008 (186 aa).

7–14 (GMPGSGKG) serves as a coordination point for ATP.

This sequence belongs to the UPF0200 family.

The polypeptide is UPF0200 protein PH1008 (Pyrococcus horikoshii (strain ATCC 700860 / DSM 12428 / JCM 9974 / NBRC 100139 / OT-3)).